A 354-amino-acid chain; its full sequence is Thiamine thiazole synthase 1, chloroplastic (354 aa).

Residues 1 to 45 (MATAAASSLLKSSFAGSRLPAATRTTPASLVVATGPRGAGAGPIC) constitute a chloroplast transit peptide. Substrate is bound by residues Ala-100, 120–121 (EQ), Gly-128, and Val-193. Cys-222 carries the 2,3-didehydroalanine (Cys) modification. Residues Asp-224, His-239, Met-291, and 301–303 (RMG) contribute to the substrate site.

The protein belongs to the THI4 family. Homooctamer. Requires Fe cation as cofactor. During the catalytic reaction, a sulfide is transferred from Cys-222 to a reaction intermediate, generating a dehydroalanine residue. Highest expression in developing embryos and green leaves and a very low level expression seen in endosperm, roots, etiolated shoots and immature ears.

The protein resides in the plastid. It is found in the chloroplast. The catalysed reaction is [ADP-thiazole synthase]-L-cysteine + glycine + NAD(+) = [ADP-thiazole synthase]-dehydroalanine + ADP-5-ethyl-4-methylthiazole-2-carboxylate + nicotinamide + 3 H2O + 2 H(+). Its function is as follows. Involved in biosynthesis of the thiamine precursor thiazole. Catalyzes the conversion of NAD and glycine to adenosine diphosphate 5-(2-hydroxyethyl)-4-methylthiazole-2-carboxylic acid (ADT), an adenylated thiazole intermediate. The reaction includes an iron-dependent sulfide transfer from a conserved cysteine residue of the protein to a thiazole intermediate. The enzyme can only undergo a single turnover, which suggests it is a suicide enzyme. May have additional roles in adaptation to various stress conditions and in DNA damage tolerance. This is Thiamine thiazole synthase 1, chloroplastic from Zea mays (Maize).